A 149-amino-acid chain; its full sequence is D-aminoacyl-tRNA deacylase (149 aa).

Positions 137–138 (GP) match the Gly-cisPro motif, important for rejection of L-amino acids motif.

It belongs to the DTD family. Homodimer.

The protein localises to the cytoplasm. It carries out the reaction glycyl-tRNA(Ala) + H2O = tRNA(Ala) + glycine + H(+). The catalysed reaction is a D-aminoacyl-tRNA + H2O = a tRNA + a D-alpha-amino acid + H(+). Functionally, an aminoacyl-tRNA editing enzyme that deacylates mischarged D-aminoacyl-tRNAs. Also deacylates mischarged glycyl-tRNA(Ala), protecting cells against glycine mischarging by AlaRS. Acts via tRNA-based rather than protein-based catalysis; rejects L-amino acids rather than detecting D-amino acids in the active site. By recycling D-aminoacyl-tRNA to D-amino acids and free tRNA molecules, this enzyme counteracts the toxicity associated with the formation of D-aminoacyl-tRNA entities in vivo and helps enforce protein L-homochirality. In Syntrophotalea carbinolica (strain DSM 2380 / NBRC 103641 / GraBd1) (Pelobacter carbinolicus), this protein is D-aminoacyl-tRNA deacylase.